Consider the following 198-residue polypeptide: Recombination protein RecR (198 aa).

A C4-type zinc finger spans residues 57–72; sequence CSVCCNLTDQDPCQIC. One can recognise a Toprim domain in the interval 80–175; it reads STICVVQEPR…KVTRIARGLP (96 aa).

It belongs to the RecR family.

May play a role in DNA repair. It seems to be involved in an RecBC-independent recombinational process of DNA repair. It may act with RecF and RecO. This chain is Recombination protein RecR, found in Symbiobacterium thermophilum (strain DSM 24528 / JCM 14929 / IAM 14863 / T).